A 44-amino-acid polypeptide reads, in one-letter code: Photosystem I reaction center subunit IX (44 aa).

The helical transmembrane segment at 7–27 (YLSVAPVLTTLWFGSLAGLLI) threads the bilayer.

This sequence belongs to the PsaJ family.

The protein localises to the plastid. The protein resides in the chloroplast thylakoid membrane. Its function is as follows. May help in the organization of the PsaE and PsaF subunits. In Liriodendron tulipifera (Tuliptree), this protein is Photosystem I reaction center subunit IX.